Here is a 508-residue protein sequence, read N- to C-terminus: MGLPWYRVHTVVLNDPGRLLAVHIMHTALVSGWAGSMALYELAVFDPSDPVLDPMWRQGMFVIPFMTRLGITDSWGGWSISGGTVTNPGIWSYEGVAATHIVFSGLCFLAAIWHWVYWDLEIFSDERTGKPSLDLPKIFGIHLFLAGVACFGFGAFHVTGLYGPGIWVSDPYGLTGKVQAVNPAWGAEGFDPFVPGGIASHHIAAGTLGILAGLFHLSVRPPQRLYKGLRMGNIETVLSSSIAAVFFAAFVVAGTMWYGSATTPIELFGPTRYQWDQGYFQQEIYRRVSNGLAENLSLSEAWSKIPEKLAFYDYIGNNPAKGGLFRAGSMDNGDGIAVGWLGHPVFRDKEGRELFVRRMPTFFETFPVVLVDEEGIVRADVPFRRAESKYSVEQVGVTVEFYGGELNGVNYSDPATVKKYARRSQLGEIFELDRATLKSDGVFRSSPRGWFTFGHATFALLFFFGHIWHGARTLFRDVFAGIDPDLDAQVEFGTFQKVGDPTTKKQAV.

6 helical membrane-spanning segments follow: residues 21–36 (AVHIMHTALVSGWAGS), 101–115 (IVFSGLCFLAAIWHW), 140–156 (GIHLFLAGVACFGFGAF), 203–218 (IAAGTLGILAGLFHLS), 237–252 (VLSSSIAAVFFAAFVV), and 457–472 (TFALLFFFGHIWHGAR).

Belongs to the PsbB/PsbC family. PsbB subfamily. PSII is composed of 1 copy each of membrane proteins PsbA, PsbB, PsbC, PsbD, PsbE, PsbF, PsbH, PsbI, PsbJ, PsbK, PsbL, PsbM, PsbT, PsbX, PsbY, PsbZ, Psb30/Ycf12, at least 3 peripheral proteins of the oxygen-evolving complex and a large number of cofactors. It forms dimeric complexes. Binds multiple chlorophylls. PSII binds additional chlorophylls, carotenoids and specific lipids. is required as a cofactor.

The protein localises to the plastid. It localises to the chloroplast thylakoid membrane. One of the components of the core complex of photosystem II (PSII). It binds chlorophyll and helps catalyze the primary light-induced photochemical processes of PSII. PSII is a light-driven water:plastoquinone oxidoreductase, using light energy to abstract electrons from H(2)O, generating O(2) and a proton gradient subsequently used for ATP formation. The protein is Photosystem II CP47 reaction center protein of Hordeum vulgare (Barley).